Consider the following 263-residue polypeptide: LIM and SH3 domain protein 1 (263 aa).

An N-acetylmethionine modification is found at methionine 1. The region spanning 3–63 (PNCARCGKIV…NAHYPKQSFT (61 aa)) is the LIM zinc-binding domain. Lysine 42 is modified (N6-acetyllysine). 2 Nebulin repeats span residues 64-95 (MVAD…KNKG) and 97-131 (GFSV…KSRM). At threonine 68 the chain carries Phosphothreonine. Residue lysine 75 is modified to N6-methyllysine. Position 99 is a phosphoserine (serine 99). Threonine 104 bears the Phosphothreonine mark. Lysine 112 carries the N6-succinyllysine modification. 2 positions are modified to phosphoserine: serine 118 and serine 134. Residues 122-207 (YHEEFEKSRM…QRSAPGGGGK (86 aa)) form a disordered region. Residues 148 to 162 (DSSSYRRPTEQQQPQ) are compositionally biased toward polar residues. Residues 204–263 (GGGKRYRAVYDYSAADEDEVSFQDGDTIVNVQQIDDGWMYGTVERTGDTGMLPANYVEAI) enclose the SH3 domain.

In terms of assembly, interacts with F-actin. Interacts with ANKRD54. Interacts with KBTBD10. Post-translationally, phosphorylated. Expressed in a wide range of tissues (but not the heart or skeletal muscle), the expression is specific for certain actin-rich cell types within these tissues. Expression is prominent in the cortical regions of ion-transporting duct cells in the pancreas, in the salivary parotid gland and in certain F-actin-rich cells in the distal tubule/collecting duct. In primary cultures of gastric fibroblasts, expression is mainly within the tips of lamellipodia and at the leading edges of membrane ruffles.

The protein localises to the cytoplasm. It localises to the cell cortex. The protein resides in the cytoskeleton. Plays an important role in the regulation of dynamic actin-based, cytoskeletal activities. Agonist-dependent changes in LASP1 phosphorylation may also serve to regulate actin-associated ion transport activities, not only in the parietal cell but also in certain other F-actin-rich secretory epithelial cell types. The chain is LIM and SH3 domain protein 1 from Rattus norvegicus (Rat).